A 453-amino-acid chain; its full sequence is MSLIHPIQAVVSNRSGELIFAVLKNVIIAYRYDQTNGKYLEMGKWEDQFSRDEMIKIAVVKEQARQLAENEEKGIKKSKTNEGNTIEKKHDAKIPVPGPGAPPIYSQIRNLMISNDETMLLACADSDKSVLVFKIETLNNDNCLKLIKRQPFPKRPNAITITEDDKTVIIADKFGDVYSMLIESPVIENIDEEFEPILGHVSMLTGVLSTTNNGMKFVMTSDRDEHIKISHFPQSYIVDKWLFGHKEFVSSICIPSWNSNILVSAGGDHGIFLWDWIKGEKLDEFDFTDLVLPYINENHLAPDRFQNEENDLKEFAVSKLVSLPNNPYFAFFVEATKLLIILEVDQSTYKMKLLQKIVLPYYITFISTFSDDKTMGFNISLDNRESGDKDFVKFIALDTTSNTFSIKEEQSDEFNTSIVNSFSKEDSIVKVELDEVYPLYNIISLKKHGEHYS.

The interval 69 to 99 is disordered; it reads ENEEKGIKKSKTNEGNTIEKKHDAKIPVPGP. WD repeat units follow at residues 103-143 and 244-286; these read PIYS…NDNC and GHKE…DEFD.

The protein belongs to the WD repeat TRM82 family. In terms of assembly, forms a heterodimer with the catalytic subunit TRM8.

Its subcellular location is the nucleus. Its pathway is tRNA modification; N(7)-methylguanine-tRNA biosynthesis. Required for the formation of N(7)-methylguanine at position 46 (m7G46) in tRNA. In the complex, it is required to stabilize and induce conformational changes of the catalytic subunit. The sequence is that of tRNA (guanine-N(7)-)-methyltransferase non-catalytic subunit TRM82 from Vanderwaltozyma polyspora (strain ATCC 22028 / DSM 70294 / BCRC 21397 / CBS 2163 / NBRC 10782 / NRRL Y-8283 / UCD 57-17) (Kluyveromyces polysporus).